Here is a 354-residue protein sequence, read N- to C-terminus: UDP-N-acetylglucosamine--N-acetylmuramyl-(pentapeptide) pyrophosphoryl-undecaprenol N-acetylglucosamine transferase (354 aa).

Residues 13-15, asparagine 125, serine 189, isoleucine 242, 261-266, and glutamine 286 contribute to the UDP-N-acetyl-alpha-D-glucosamine site; these read SGG and ALTVSE.

Belongs to the glycosyltransferase 28 family. MurG subfamily.

It localises to the cell inner membrane. The catalysed reaction is di-trans,octa-cis-undecaprenyl diphospho-N-acetyl-alpha-D-muramoyl-L-alanyl-D-glutamyl-meso-2,6-diaminopimeloyl-D-alanyl-D-alanine + UDP-N-acetyl-alpha-D-glucosamine = di-trans,octa-cis-undecaprenyl diphospho-[N-acetyl-alpha-D-glucosaminyl-(1-&gt;4)]-N-acetyl-alpha-D-muramoyl-L-alanyl-D-glutamyl-meso-2,6-diaminopimeloyl-D-alanyl-D-alanine + UDP + H(+). It functions in the pathway cell wall biogenesis; peptidoglycan biosynthesis. Its function is as follows. Cell wall formation. Catalyzes the transfer of a GlcNAc subunit on undecaprenyl-pyrophosphoryl-MurNAc-pentapeptide (lipid intermediate I) to form undecaprenyl-pyrophosphoryl-MurNAc-(pentapeptide)GlcNAc (lipid intermediate II). The sequence is that of UDP-N-acetylglucosamine--N-acetylmuramyl-(pentapeptide) pyrophosphoryl-undecaprenol N-acetylglucosamine transferase from Buchnera aphidicola subsp. Acyrthosiphon pisum (strain 5A).